A 269-amino-acid polypeptide reads, in one-letter code: MLTIADHQFSSRLLTGTGKFSNHNTMLQAIASSGSQLVTLAMKRIDLTRGHDNLLGPLQSMGVKLLPNTAGARNAKEAIFAAELAYEMLGTKWIKLEIHPDPKYLMPDPIETLIAAQHLCEKGYIVMPYVHADPVLCRRLEEVGCAAVMPLGSPIGSNQGLATETFLSIIIEQANIPVIVDAGIGAPSQACRAMEMGAAAVLVNTAIASSANPQQMAKCFADAVATGRQAYLAGLGAVNNHAHATSPLTGFLSEPSISSLAKSVNSKGG.

Residue K95 is the Schiff-base intermediate with DXP of the active site. Residues G156, 182–183, and 204–205 contribute to the 1-deoxy-D-xylulose 5-phosphate site; these read AG and NT.

The protein belongs to the ThiG family. In terms of assembly, homotetramer. Forms heterodimers with either ThiH or ThiS.

The protein resides in the cytoplasm. It carries out the reaction [ThiS sulfur-carrier protein]-C-terminal-Gly-aminoethanethioate + 2-iminoacetate + 1-deoxy-D-xylulose 5-phosphate = [ThiS sulfur-carrier protein]-C-terminal Gly-Gly + 2-[(2R,5Z)-2-carboxy-4-methylthiazol-5(2H)-ylidene]ethyl phosphate + 2 H2O + H(+). It participates in cofactor biosynthesis; thiamine diphosphate biosynthesis. Its function is as follows. Catalyzes the rearrangement of 1-deoxy-D-xylulose 5-phosphate (DXP) to produce the thiazole phosphate moiety of thiamine. Sulfur is provided by the thiocarboxylate moiety of the carrier protein ThiS. In vitro, sulfur can be provided by H(2)S. The chain is Thiazole synthase from Shewanella frigidimarina (strain NCIMB 400).